Consider the following 305-residue polypeptide: DNA-directed RNA polymerase 35 kDa subunit (305 aa).

This sequence belongs to the poxviridae DNA-directed RNA polymerase 35 kDa subunit family. In terms of assembly, the DNA-dependent RNA polymerase used for intermediate and late genes expression consists of eight subunits 147 kDa, 133 kDa, 35 kDa, 30 kDa, 22 kDa, 19 kDa, 18 kDa and 7 kDa totalling more than 500 kDa in mass. The same holoenzyme, with the addition of the transcription-specificity factor RAP94, is used for early gene expression.

Its subcellular location is the virion. The enzyme catalyses RNA(n) + a ribonucleoside 5'-triphosphate = RNA(n+1) + diphosphate. In terms of biological role, part of the DNA-dependent RNA polymerase which catalyzes the transcription of viral DNA into RNA using the four ribonucleoside triphosphates as substrates. Responsible for the transcription of early, intermediate and late genes. DNA-dependent RNA polymerase associates with the early transcription factor (ETF), itself composed of D6 and A7, thereby allowing the early genes transcription. Late transcription, and probably also intermediate transcription, require newly synthesized RNA polymerase. This chain is DNA-directed RNA polymerase 35 kDa subunit (RPO35), found in Homo sapiens (Human).